The chain runs to 290 residues: Shikimate dehydrogenase (NADP(+)) (290 aa).

Shikimate contacts are provided by residues 22–24 (SLS) and threonine 68. Lysine 72 functions as the Proton acceptor in the catalytic mechanism. Residues asparagine 93 and aspartate 108 each contribute to the shikimate site. Residues 133 to 137 (GSGGS) and isoleucine 228 contribute to the NADP(+) site. A shikimate-binding site is contributed by tyrosine 230. Glycine 251 contacts NADP(+).

This sequence belongs to the shikimate dehydrogenase family. As to quaternary structure, homodimer.

The catalysed reaction is shikimate + NADP(+) = 3-dehydroshikimate + NADPH + H(+). It functions in the pathway metabolic intermediate biosynthesis; chorismate biosynthesis; chorismate from D-erythrose 4-phosphate and phosphoenolpyruvate: step 4/7. Its function is as follows. Involved in the biosynthesis of the chorismate, which leads to the biosynthesis of aromatic amino acids. Catalyzes the reversible NADPH linked reduction of 3-dehydroshikimate (DHSA) to yield shikimate (SA). The protein is Shikimate dehydrogenase (NADP(+)) of Leptospira borgpetersenii serovar Hardjo-bovis (strain JB197).